We begin with the raw amino-acid sequence, 270 residues long: tRNA (guanine-N(1)-)-methyltransferase (270 aa).

S-adenosyl-L-methionine is bound by residues Gly-119 and 139-144 (IGDYVI).

This sequence belongs to the RNA methyltransferase TrmD family. Homodimer.

The protein localises to the cytoplasm. It carries out the reaction guanosine(37) in tRNA + S-adenosyl-L-methionine = N(1)-methylguanosine(37) in tRNA + S-adenosyl-L-homocysteine + H(+). Its function is as follows. Specifically methylates guanosine-37 in various tRNAs. The chain is tRNA (guanine-N(1)-)-methyltransferase from Nitrosomonas europaea (strain ATCC 19718 / CIP 103999 / KCTC 2705 / NBRC 14298).